Consider the following 484-residue polypeptide: Phosphatidylinositol N-acetylglucosaminyltransferase subunit A (484 aa).

Residues 1–421 (MACRGGAGNG…RLDRLISHCG (421 aa)) are Cytoplasmic-facing. A phosphoserine mark is found at S21 and S24. Residues 422-442 (PVTGYIFALLAVFNFLFLIFL) traverse the membrane as a helical segment. Residues 443-484 (RWMTPDSIIDVAIDATGPRGAWTNNYSHSKRGGENNEISETR) lie on the Lumenal side of the membrane. N467 carries an N-linked (GlcNAc...) asparagine glycan.

This sequence belongs to the glycosyltransferase group 1 family. Glycosyltransferase 4 subfamily. In terms of assembly, component of the glycosylphosphatidylinositol-N-acetylglucosaminyltransferase (GPI-GnT) complex composed at least by PIGA, PIGC, PIGH, PIGP, PIGQ, PIGY and DPM2. Interacts with PIGC, PIGH, PIGP, PIGQ and DPM2. Interacts directly with PIGY; this interaction regulates glycosylphosphatidylinositol-N-acetylglucosaminyltransferase activity. Interacts with PIGQ.

The protein resides in the endoplasmic reticulum membrane. The catalysed reaction is a 1,2-diacyl-sn-glycero-3-phospho-(1D-myo-inositol) + UDP-N-acetyl-alpha-D-glucosamine = a 6-(N-acetyl-alpha-D-glucosaminyl)-1-(1,2-diacyl-sn-glycero-3-phospho)-1D-myo-inositol + UDP + H(+). Its pathway is glycolipid biosynthesis; glycosylphosphatidylinositol-anchor biosynthesis. In terms of biological role, catalytic subunit of the glycosylphosphatidylinositol-N-acetylglucosaminyltransferase (GPI-GnT) complex that catalyzes the transfer of N-acetylglucosamine from UDP-N-acetylglucosamine to phosphatidylinositol and participates in the first step of GPI biosynthesis. This is Phosphatidylinositol N-acetylglucosaminyltransferase subunit A from Homo sapiens (Human).